A 200-amino-acid polypeptide reads, in one-letter code: MARFRGSNWKKSRRLGISLSGTGKELEKRPYAPGQHGPNQRKKLSEYGLQLREKQKLRYLYGMTERQFRNTFDIAGKKFGVHGENFMILLASRLDAVVYSLGLARTRRQARQLVNHGHILVDGKRVDIPSYSVKPGQTISVREKSQKLNIIVESVEINNFVPEYLNFDADSLTGTFVRLPERSELPAEINEQLIVEYYSR.

Residues 92 to 155 (SRLDAVVYSL…QKLNIIVESV (64 aa)) form the S4 RNA-binding domain.

It belongs to the universal ribosomal protein uS4 family. As to quaternary structure, part of the 30S ribosomal subunit. Contacts protein S5. The interaction surface between S4 and S5 is involved in control of translational fidelity.

One of the primary rRNA binding proteins, it binds directly to 16S rRNA where it nucleates assembly of the body of the 30S subunit. Functionally, with S5 and S12 plays an important role in translational accuracy. The chain is Small ribosomal subunit protein uS4 from Staphylococcus aureus (strain JH9).